Consider the following 280-residue polypeptide: Cyanocobalamin reductase / alkylcobalamin dealkylase (280 aa).

Substrate-binding positions include Asp104, 115–118, 129–131, Cys149, and Ile160; these read ILAQ and YYQ. Residues Ser245, Ser247, Ser273, and Ser277 each carry the phosphoserine modification. Positions 256-280 are disordered; the sequence is LSKKPQNPRRGWLSPTVSPPISPGP.

It belongs to the MMACHC family. Monomer in the absence of bound substrate. Homodimer; dimerization is triggered by binding to FMN or adenosylcobalamin. Interacts with LMBRD1 and ABCD4; the interaction ensures the transport of cobalamin from the lysosome to the cytoplasm. Forms a multiprotein complex with MMADHC, MTR and MTRR; the interaction with MTR could modulate MMACHC-dependent processing of cobalamin. Heterodimer with MMADHC; the interaction might play a role in the regulation of the balance between AdoCbl and MeCbl synthesis. FAD is required as a cofactor. The cofactor is FMN.

It localises to the cytoplasm. Its subcellular location is the cytosol. It carries out the reaction 2 cob(II)alamin-[cyanocobalamin reductase] + 2 hydrogen cyanide + NADP(+) = 2 cyanocob(III)alamin + 2 apo-[cyanocobalamin reductase] + NADPH + H(+). It catalyses the reaction apo-[alkylcobalamin reductase] + an R-cob(III)alamin + glutathione = cob(I)alamin-[alkylcobalamin reductase] + an S-substituted glutathione + H(+). The catalysed reaction is apo-[alkylcobalamin reductase] + methylcob(III)alamin + glutathione = S-methyl glutathione + cob(I)alamin-[alkylcobalamin reductase] + H(+). The enzyme catalyses apo-[alkylcobalamin reductase] + adenosylcob(III)alamin + glutathione = S-adenosylglutathione + cob(I)alamin-[alkylcobalamin reductase] + H(+). In terms of biological role, cobalamin (vitamin B12) cytosolic chaperone that catalyzes the reductive decyanation of cyanocob(III)alamin (cyanocobalamin, CNCbl) to yield cob(II)alamin and cyanide, using FAD or FMN as cofactors and NADPH as cosubstrate. Cyanocobalamin constitutes the inactive form of vitamin B12 introduced from the diet, and is converted into the active cofactors methylcobalamin (MeCbl) involved in methionine biosynthesis, and 5'-deoxyadenosylcobalamin (AdoCbl) involved in the TCA cycle. Forms a complex with the lysosomal transporter ABCD4 and its chaperone LMBRD1, to transport cobalamin across the lysosomal membrane into the cytosol. The processing of cobalamin in the cytosol occurs in a multiprotein complex composed of at least MMACHC, MMADHC, MTRR (methionine synthase reductase) and MTR (methionine synthase) which may contribute to shuttle safely and efficiently cobalamin towards MTR in order to produce methionine. Also acts as a glutathione transferase by catalyzing the dealkylation of the alkylcob(III)alamins MeCbl and AdoCbl, using the thiolate of glutathione for nucleophilic displacement to generate cob(I)alamin and the corresponding glutathione thioether. The conversion of incoming MeCbl or AdoCbl into a common intermediate cob(I)alamin is necessary to meet the cellular needs for both cofactors. Cysteine and homocysteine cannot substitute for glutathione in this reaction. This is Cyanocobalamin reductase / alkylcobalamin dealkylase (MMACHC) from Bos taurus (Bovine).